We begin with the raw amino-acid sequence, 262 residues long: 4-hydroxy-2-oxo-heptane-1,7-dioate aldolase (262 aa).

The Proton acceptor role is filled by His-45. Substrate is bound at residue Gln-147. Residue Glu-149 participates in a divalent metal cation binding. Substrate contacts are provided by Ala-174 and Asp-175. Residue Asp-175 participates in a divalent metal cation binding.

It belongs to the HpcH/HpaI aldolase family. In terms of assembly, homohexamer; trimer of dimers. The cofactor is a divalent metal cation.

The catalysed reaction is 4-hydroxy-2-oxoheptanedioate = succinate semialdehyde + pyruvate. It functions in the pathway aromatic compound metabolism; 4-hydroxyphenylacetate degradation; pyruvate and succinate semialdehyde from 4-hydroxyphenylacetate: step 7/7. In terms of biological role, catalyzes the reversible retro-aldol cleavage of 4-hydroxy-2-ketoheptane-1,7-dioate (HKHD) to pyruvate and succinic semialdehyde. In Shigella sonnei (strain Ss046), this protein is 4-hydroxy-2-oxo-heptane-1,7-dioate aldolase.